Consider the following 386-residue polypeptide: Cytoplasmic 60S subunit biogenesis factor ZNF622 (386 aa).

Alanine 2 is subject to N-acetylalanine. 2 U1-type zinc fingers span residues 4-28 and 67-91; these read YTCITCRVAFRDAEMQRAHYKTDWH and TYCTVCSKKFATFNAYENHLKSRRH. The segment at 135-237 is disordered; that stretch reads AIKAQPSTSP…AEDAEAEESP (103 aa). Residues 165–176 are compositionally biased toward basic and acidic residues; sequence GTPERDPTEKPP. Positions 194 to 235 are enriched in acidic residues; that stretch reads EESEEEGEEDDEDWEDIDSDDGLECENPGVEEEDAEDAEAEE. The residue at position 269 (serine 269) is a Phosphoserine.

It belongs to the REI1 family. Homo- and heterodimer. Associates with pre-60S ribosomal particles. Interacts with MELK and MYBL2. Interacts with DNAJC21. In terms of processing, phosphorylated by MELK. The phosphorylation may redirect the protein to the nucleus. Ubiquitinated by HECTD1, leading to its degradation.

It is found in the cytoplasm. The protein localises to the nucleus. Pre-60S-associated cytoplasmic factor involved in the cytoplasmic maturation of the 60S subunit. The sequence is that of Cytoplasmic 60S subunit biogenesis factor ZNF622 (Znf622) from Rattus norvegicus (Rat).